Reading from the N-terminus, the 286-residue chain is Bifunctional protein FolD (286 aa).

NADP(+) is bound by residues 165-167 (GRS), Ser-190, and Val-231.

It belongs to the tetrahydrofolate dehydrogenase/cyclohydrolase family. As to quaternary structure, homodimer.

The enzyme catalyses (6R)-5,10-methylene-5,6,7,8-tetrahydrofolate + NADP(+) = (6R)-5,10-methenyltetrahydrofolate + NADPH. It catalyses the reaction (6R)-5,10-methenyltetrahydrofolate + H2O = (6R)-10-formyltetrahydrofolate + H(+). It functions in the pathway one-carbon metabolism; tetrahydrofolate interconversion. Functionally, catalyzes the oxidation of 5,10-methylenetetrahydrofolate to 5,10-methenyltetrahydrofolate and then the hydrolysis of 5,10-methenyltetrahydrofolate to 10-formyltetrahydrofolate. This chain is Bifunctional protein FolD, found in Bacillus anthracis (strain A0248).